A 500-amino-acid polypeptide reads, in one-letter code: AMP phosphorylase (500 aa).

AMP-binding positions include Gly-166, Ser-192–Ser-197, and Thr-201. Asp-254 serves as the catalytic Proton donor. The AMP site is built by Ser-262 and Lys-286.

It belongs to the thymidine/pyrimidine-nucleoside phosphorylase family. Type 2 subfamily.

It carries out the reaction AMP + phosphate = alpha-D-ribose 1,5-bisphosphate + adenine. It catalyses the reaction CMP + phosphate = cytosine + alpha-D-ribose 1,5-bisphosphate. The enzyme catalyses UMP + phosphate = alpha-D-ribose 1,5-bisphosphate + uracil. Its function is as follows. Catalyzes the conversion of AMP and phosphate to adenine and ribose 1,5-bisphosphate (R15P). Exhibits phosphorylase activity toward CMP and UMP in addition to AMP. Functions in an archaeal AMP degradation pathway, together with R15P isomerase and RubisCO. This chain is AMP phosphorylase (deoA), found in Natronomonas pharaonis (strain ATCC 35678 / DSM 2160 / CIP 103997 / JCM 8858 / NBRC 14720 / NCIMB 2260 / Gabara) (Halobacterium pharaonis).